We begin with the raw amino-acid sequence, 119 residues long: Large ribosomal subunit protein uL18 (119 aa).

Residues 1-10 (MKKIKEAEQR) show a composition bias toward basic and acidic residues. The disordered stretch occupies residues 1-20 (MKKIKEAEQRKLRRKKRIKD).

Belongs to the universal ribosomal protein uL18 family. In terms of assembly, part of the 50S ribosomal subunit; part of the 5S rRNA/L5/L18/L25 subcomplex. Contacts the 5S and 23S rRNAs.

Its function is as follows. This is one of the proteins that bind and probably mediate the attachment of the 5S RNA into the large ribosomal subunit, where it forms part of the central protuberance. This Borreliella burgdorferi (strain ATCC 35210 / DSM 4680 / CIP 102532 / B31) (Borrelia burgdorferi) protein is Large ribosomal subunit protein uL18.